A 214-amino-acid polypeptide reads, in one-letter code: Osteoclast-stimulating factor 1 (214 aa).

The SH3 domain occupies 12-71; the sequence is GQVKVFRALFTFDPRTPDELYFEEGDILYISDTSDTNWWKGTCRGRTGLIPSNYVAEQAE. 3 ANK repeats span residues 72–101, 105–135, and 139–168; these read TIDHPMHEAAKRGNLSWLRECVENKVGING, AGNTALYWACHGGHKDVVELLLNQPSVELNQ, and LGDTVLHAAAWKGYSDIVEMLLDKNARTDI.

Ubiquitously expressed.

The protein localises to the cytoplasm. Induces bone resorption, acting probably through a signaling cascade which results in the secretion of factor(s) enhancing osteoclast formation and activity. This is Osteoclast-stimulating factor 1 (ostf1) from Monopterus albus (Swamp eel).